Here is a 405-residue protein sequence, read N- to C-terminus: MKAKLALSIIGLVLASLVAGCIGGGTQTQTQTQGKSIKVAILFDVGGRGDLSFNDMAYLGAERAKKELGVKIEYMTPKSKEDMVPLLEQLAKSKEYDLLVLVGFLWTTPLNEVADKYPDQKFALIDSTTGKVRPNEVDILFREQEVAALMGVIASGMAYELGGDTIGAVAGMDIPPLWKFHIGYLFGAKYFEKKTGKHVKLLWQYTGTFGDTQVGYNTAMQLLQQGAKVLYGLAGLTHVGMFDAVKDWNEQGRGKALAMGQDASQEWYAPKYIPISGAKRVDVAVYDAIKMVVDGTWKGGIITLGLKENGVGYWDLDGVKQFAEFAKEAGKLKDMTPDEVVEIVKQQREKYIKPYVWEIVNELAEKIKNGEIVFKTPKSHDEYEQIINELEKGNLNAALKKGSVE.

A signal peptide spans 1 to 20 (MKAKLALSIIGLVLASLVAG). Residue C21 is modified to N-acetylcysteine. C21 carries S-archaeol cysteine lipidation.

This sequence belongs to the BMP lipoprotein family.

The protein resides in the cell membrane. This is an uncharacterized protein from Pyrococcus horikoshii (strain ATCC 700860 / DSM 12428 / JCM 9974 / NBRC 100139 / OT-3).